An 838-amino-acid polypeptide reads, in one-letter code: Translation initiation factor IF-2 (838 aa).

Residues 1–235 (MSDTDGKKPL…RSLAAMKREQ (235 aa)) form a disordered region. Residues 18 to 27 (SGQVKQSFSH) show a composition bias toward polar residues. Low complexity predominate over residues 50–60 (SGSSTTTSSPS). The span at 88-156 (KLREVDDAKR…AARRAEEAKR (69 aa)) shows a compositional bias: basic and acidic residues. Residues 162-177 (PAAAQPDAADSRASAP) are compositionally biased toward low complexity. Residues 187 to 208 (SRKEREREADRDRTTKKDDSRR) show a composition bias toward basic and acidic residues. The region spanning 335-509 (PRPPIITIMG…ELLDLRANPK (175 aa)) is the tr-type G domain. The interval 344–351 (GHVDHGKT) is G1. 344–351 (GHVDHGKT) is a GTP binding site. The tract at residues 369 to 373 (GITQH) is G2. A G3 region spans residues 391-394 (DTPG). Residues 391–395 (DTPGH) and 445–448 (NKID) contribute to the GTP site. The tract at residues 445 to 448 (NKID) is G4. A G5 region spans residues 481 to 483 (SAK).

The protein belongs to the TRAFAC class translation factor GTPase superfamily. Classic translation factor GTPase family. IF-2 subfamily.

Its subcellular location is the cytoplasm. Functionally, one of the essential components for the initiation of protein synthesis. Protects formylmethionyl-tRNA from spontaneous hydrolysis and promotes its binding to the 30S ribosomal subunits. Also involved in the hydrolysis of GTP during the formation of the 70S ribosomal complex. This Cereibacter sphaeroides (strain ATCC 17025 / ATH 2.4.3) (Rhodobacter sphaeroides) protein is Translation initiation factor IF-2.